The chain runs to 1135 residues: WASH complex subunit 4 (1135 aa).

Ala2 carries the N-acetylalanine modification.

It belongs to the SWIP family. Probable component of the WASH complex.

The chain is WASH complex subunit 4 from Dictyostelium discoideum (Social amoeba).